A 113-amino-acid chain; its full sequence is MQAKAVARTVRIAPRKVRLVVDLIRGKQVGEAIAILNHTPKTASPVVEKVLKSAIANAEHNYEMDVNNLVVEKVFVDEGPTLKRFRPRAMGRASQINKRTSHITVVVSEKKEG.

This sequence belongs to the universal ribosomal protein uL22 family. In terms of assembly, part of the 50S ribosomal subunit.

Functionally, this protein binds specifically to 23S rRNA; its binding is stimulated by other ribosomal proteins, e.g. L4, L17, and L20. It is important during the early stages of 50S assembly. It makes multiple contacts with different domains of the 23S rRNA in the assembled 50S subunit and ribosome. Its function is as follows. The globular domain of the protein is located near the polypeptide exit tunnel on the outside of the subunit, while an extended beta-hairpin is found that lines the wall of the exit tunnel in the center of the 70S ribosome. In Bacillus cytotoxicus (strain DSM 22905 / CIP 110041 / 391-98 / NVH 391-98), this protein is Large ribosomal subunit protein uL22.